A 186-amino-acid chain; its full sequence is Probable nicotinate-nucleotide adenylyltransferase (186 aa).

Belongs to the NadD family.

It catalyses the reaction nicotinate beta-D-ribonucleotide + ATP + H(+) = deamido-NAD(+) + diphosphate. It functions in the pathway cofactor biosynthesis; NAD(+) biosynthesis; deamido-NAD(+) from nicotinate D-ribonucleotide: step 1/1. Its function is as follows. Catalyzes the reversible adenylation of nicotinate mononucleotide (NaMN) to nicotinic acid adenine dinucleotide (NaAD). The protein is Probable nicotinate-nucleotide adenylyltransferase of Tropheryma whipplei (strain TW08/27) (Whipple's bacillus).